Here is a 233-residue protein sequence, read N- to C-terminus: 2-C-methyl-D-erythritol 4-phosphate cytidylyltransferase (233 aa).

This sequence belongs to the IspD/TarI cytidylyltransferase family. IspD subfamily.

The catalysed reaction is 2-C-methyl-D-erythritol 4-phosphate + CTP + H(+) = 4-CDP-2-C-methyl-D-erythritol + diphosphate. It participates in isoprenoid biosynthesis; isopentenyl diphosphate biosynthesis via DXP pathway; isopentenyl diphosphate from 1-deoxy-D-xylulose 5-phosphate: step 2/6. Its function is as follows. Catalyzes the formation of 4-diphosphocytidyl-2-C-methyl-D-erythritol from CTP and 2-C-methyl-D-erythritol 4-phosphate (MEP). The polypeptide is 2-C-methyl-D-erythritol 4-phosphate cytidylyltransferase (Lachnoclostridium phytofermentans (strain ATCC 700394 / DSM 18823 / ISDg) (Clostridium phytofermentans)).